A 372-amino-acid polypeptide reads, in one-letter code: NAD(P)H-quinone oxidoreductase subunit 1 (372 aa).

The next 8 membrane-spanning stretches (helical) occupy residues 27-47 (IIWLPLPMLLVLVSAVVGVLV), 97-117 (ILFTAGPILVLVPVILSWLIV), 128-148 (VGIGIFLWIALSSIQPIGLLM), 176-196 (LALSVLAIVLMTNSLSTIDIV), 204-224 (ILSWNIWRQPVGFIIFWICAL), 266-286 (ILSALLVSILYLGGWGFPIPV), 308-328 (SIGIIMTVLKAYLLVFVAILL), and 347-367 (FLLPISLANLLVTAGLKLAFP).

This sequence belongs to the complex I subunit 1 family. As to quaternary structure, NDH-1 is composed of at least 11 different subunits.

The protein resides in the cellular thylakoid membrane. The catalysed reaction is a plastoquinone + NADH + (n+1) H(+)(in) = a plastoquinol + NAD(+) + n H(+)(out). It carries out the reaction a plastoquinone + NADPH + (n+1) H(+)(in) = a plastoquinol + NADP(+) + n H(+)(out). In terms of biological role, NDH-1 shuttles electrons from an unknown electron donor, via FMN and iron-sulfur (Fe-S) centers, to quinones in the respiratory and/or the photosynthetic chain. The immediate electron acceptor for the enzyme in this species is believed to be plastoquinone. Couples the redox reaction to proton translocation, and thus conserves the redox energy in a proton gradient. This Prochlorococcus marinus subsp. pastoris (strain CCMP1986 / NIES-2087 / MED4) protein is NAD(P)H-quinone oxidoreductase subunit 1.